A 105-amino-acid polypeptide reads, in one-letter code: Large ribosomal subunit protein uL24 (105 aa).

It belongs to the universal ribosomal protein uL24 family. Part of the 50S ribosomal subunit.

Its function is as follows. One of two assembly initiator proteins, it binds directly to the 5'-end of the 23S rRNA, where it nucleates assembly of the 50S subunit. Functionally, one of the proteins that surrounds the polypeptide exit tunnel on the outside of the subunit. This is Large ribosomal subunit protein uL24 from Sphingopyxis alaskensis (strain DSM 13593 / LMG 18877 / RB2256) (Sphingomonas alaskensis).